Here is a 207-residue protein sequence, read N- to C-terminus: Nuclear transcription factor Y subunit beta (207 aa).

The segment at 1–52 (MTMDGDSSTTDASQLGISADYIGGSHYVIQPHDDTEDSMNDHEDTNGSKESF) is a domain. The segment at 27 to 52 (YVIQPHDDTEDSMNDHEDTNGSKESF) is disordered. Residues 39–52 (MNDHEDTNGSKESF) are compositionally biased toward basic and acidic residues. A b domain region spans residues 53–142 (REQDIYLPIA…PLKLYLQKFR (90 aa)). A DNA-binding region spans residues 59-65 (LPIANVA). A subunit association domain (SAD) region spans residues 86 to 97 (VQECVSEFISFI). K140 participates in a covalent cross-link: Glycyl lysine isopeptide (Lys-Gly) (interchain with G-Cter in ubiquitin). Positions 143 to 207 (EAMKGEKGIG…ISGVQQIQFS (65 aa)) are c domain.

This sequence belongs to the NFYB/HAP3 subunit family. As to quaternary structure, heterotrimeric transcription factor composed of three components, NF-YA, NF-YB and NF-YC. NF-YB and NF-YC must interact and dimerize for NF-YA association and DNA binding. Interacts with C1QBP. Monoubiquitination at Lys-140 plays an important role in transcriptional activation by allowing the deposition of histone H3 methylations as well as histone H2B monoubiquitination at 'Lys-121'.

It localises to the nucleus. In terms of biological role, component of the sequence-specific heterotrimeric transcription factor (NF-Y) which specifically recognizes a 5'-CCAAT-3' box motif found in the promoters of its target genes. NF-Y can function as both an activator and a repressor, depending on its interacting cofactors. This is Nuclear transcription factor Y subunit beta (NFYB) from Homo sapiens (Human).